Reading from the N-terminus, the 361-residue chain is Glycerophosphodiester phosphodiesterase GDPD1, chloroplastic (361 aa).

The transit peptide at 1–53 (MSLKAIHVSEVPSLDHFPENPSLICSSRKANNKFVVVGHRGHGMNMSQSPDLR) directs the protein to the chloroplast. The GP-PDE domain maps to 54–323 (FSALKENSIL…DHVEEITEAV (270 aa)).

It belongs to the glycerophosphoryl diester phosphodiesterase family. Mg(2+) serves as cofactor. In terms of tissue distribution, expressed in roots, shoots, rosette leaves, stems, flowers and siliques.

It is found in the plastid. The protein resides in the chloroplast. The catalysed reaction is a sn-glycero-3-phosphodiester + H2O = an alcohol + sn-glycerol 3-phosphate + H(+). Its function is as follows. Hydrolyzes glycerolphosphoglycerol, glycerophosphocholine and glycerophosphoethanolamine in vitro. May be involved in release of inorganic phosphate (Pi) from phospholipids during Pi starvation. The sequence is that of Glycerophosphodiester phosphodiesterase GDPD1, chloroplastic from Arabidopsis thaliana (Mouse-ear cress).